We begin with the raw amino-acid sequence, 60 residues long: Protein translocase subunit SecE (60 aa).

The helical transmembrane segment at 31–51 (IIVVSTVIFFLVFFYALDIGI) threads the bilayer.

This sequence belongs to the SecE/SEC61-gamma family. As to quaternary structure, component of the Sec protein translocase complex. Heterotrimer consisting of SecY, SecE and SecG subunits. The heterotrimers can form oligomers, although 1 heterotrimer is thought to be able to translocate proteins. Interacts with the ribosome. Interacts with SecDF, and other proteins may be involved. Interacts with SecA.

The protein localises to the cell membrane. In terms of biological role, essential subunit of the Sec protein translocation channel SecYEG. Clamps together the 2 halves of SecY. May contact the channel plug during translocation. This is Protein translocase subunit SecE from Staphylococcus epidermidis (strain ATCC 35984 / DSM 28319 / BCRC 17069 / CCUG 31568 / BM 3577 / RP62A).